The following is a 119-amino-acid chain: Ribonuclease P protein component (119 aa).

The interval Met-1 to Lys-20 is disordered.

The protein belongs to the RnpA family. As to quaternary structure, consists of a catalytic RNA component (M1 or rnpB) and a protein subunit.

It carries out the reaction Endonucleolytic cleavage of RNA, removing 5'-extranucleotides from tRNA precursor.. In terms of biological role, RNaseP catalyzes the removal of the 5'-leader sequence from pre-tRNA to produce the mature 5'-terminus. It can also cleave other RNA substrates such as 4.5S RNA. The protein component plays an auxiliary but essential role in vivo by binding to the 5'-leader sequence and broadening the substrate specificity of the ribozyme. This is Ribonuclease P protein component from Mycolicibacterium vanbaalenii (strain DSM 7251 / JCM 13017 / BCRC 16820 / KCTC 9966 / NRRL B-24157 / PYR-1) (Mycobacterium vanbaalenii).